The chain runs to 285 residues: Shikimate dehydrogenase (NADP(+)) (285 aa).

Shikimate-binding positions include 22 to 24 (SRS) and Thr-71. The active-site Proton acceptor is Lys-75. Shikimate is bound by residues Asn-96 and Asp-111. NADP(+) is bound by residues 136-140 (GAGGA), 160-165 (NRTVGR), and Ile-225. Tyr-227 serves as a coordination point for shikimate. Gly-248 serves as a coordination point for NADP(+).

Belongs to the shikimate dehydrogenase family. Homodimer.

The enzyme catalyses shikimate + NADP(+) = 3-dehydroshikimate + NADPH + H(+). Its pathway is metabolic intermediate biosynthesis; chorismate biosynthesis; chorismate from D-erythrose 4-phosphate and phosphoenolpyruvate: step 4/7. Its function is as follows. Involved in the biosynthesis of the chorismate, which leads to the biosynthesis of aromatic amino acids. Catalyzes the reversible NADPH linked reduction of 3-dehydroshikimate (DHSA) to yield shikimate (SA). The polypeptide is Shikimate dehydrogenase (NADP(+)) (Rhizobium etli (strain CIAT 652)).